The following is a 390-amino-acid chain: Chorismate synthase 1 (390 aa).

NADP(+) is bound by residues R39 and R45. Residues 95–117 (EQEEKEMKRKVTKPRPGHADLNG) form a disordered region. FMN-binding positions include 132 to 134 (RSS), 253 to 254 (NA), G298, 313 to 317 (KPIPT), and R339.

It belongs to the chorismate synthase family. Homotetramer. It depends on FMNH2 as a cofactor.

The enzyme catalyses 5-O-(1-carboxyvinyl)-3-phosphoshikimate = chorismate + phosphate. It functions in the pathway metabolic intermediate biosynthesis; chorismate biosynthesis; chorismate from D-erythrose 4-phosphate and phosphoenolpyruvate: step 7/7. Functionally, catalyzes the anti-1,4-elimination of the C-3 phosphate and the C-6 proR hydrogen from 5-enolpyruvylshikimate-3-phosphate (EPSP) to yield chorismate, which is the branch point compound that serves as the starting substrate for the three terminal pathways of aromatic amino acid biosynthesis. This reaction introduces a second double bond into the aromatic ring system. In Bacillus cereus (strain ATCC 10987 / NRS 248), this protein is Chorismate synthase 1.